A 249-amino-acid chain; its full sequence is DNA repair protein RecO (249 aa).

It belongs to the RecO family.

In terms of biological role, involved in DNA repair and RecF pathway recombination. The protein is DNA repair protein RecO of Rhodopseudomonas palustris (strain BisB5).